Reading from the N-terminus, the 257-residue chain is E3 ubiquitin-protein ligase RNF170 (257 aa).

The Lumenal portion of the chain corresponds to 1–24 (MADNQEGRPYFPLDEGSIIEGVSD). A helical transmembrane segment spans residues 25–45 (QVIVVVLLSFVAVGSLLYLLL). Residues 46-200 (RNDEQNIHPE…GGLFWMFRIR (155 aa)) are Cytoplasmic-facing. An RING-type zinc finger spans residues 87 to 130 (CPVCLQQATFPVETNCGHLFCGSCIIAYWRYGSWLGAINCPICR). Residues 201 to 221 (IVLCLLGALFYLVSPLDIIPE) traverse the membrane as a helical segment. A222 is a topological domain (lumenal). The chain crosses the membrane as a helical span at residues 223 to 243 (VFGLLGFLDDFFVLFLLLIYI). Residues 244–257 (SIMYREVVTQRLYR) lie on the Cytoplasmic side of the membrane.

The protein localises to the endoplasmic reticulum membrane. It carries out the reaction S-ubiquitinyl-[E2 ubiquitin-conjugating enzyme]-L-cysteine + [acceptor protein]-L-lysine = [E2 ubiquitin-conjugating enzyme]-L-cysteine + N(6)-ubiquitinyl-[acceptor protein]-L-lysine.. It participates in protein modification; protein ubiquitination. E3 ubiquitin-protein ligase that plays an essential role in stimulus-induced inositol 1,4,5-trisphosphate receptor (ITPR) ubiquitination and degradation via the endoplasmic reticulum-associated degradation (ERAD) pathway. Also involved in ITPR turnover in resting cells. The polypeptide is E3 ubiquitin-protein ligase RNF170 (rnf170) (Xenopus tropicalis (Western clawed frog)).